Reading from the N-terminus, the 445-residue chain is Mannan endo-1,4-beta-mannosidase 2 (445 aa).

Residues 1-27 form the signal peptide; that stretch reads MAVGNGLILYHILGLASCIALVYFSLG. Trp-110 contacts substrate. Residue Asn-181 is glycosylated (N-linked (GlcNAc...) asparagine). Position 226 (Asn-226) interacts with substrate. The Proton donor role is filled by Glu-227. Residue Tyr-309 participates in substrate binding. Catalysis depends on Glu-349, which acts as the Nucleophile. Trp-391 is a substrate binding site.

Belongs to the glycosyl hydrolase 5 (cellulase A) family. As to expression, expressed in stems and seeds, and at lower levels in roots and leaves.

The protein resides in the secreted. It carries out the reaction Random hydrolysis of (1-&gt;4)-beta-D-mannosidic linkages in mannans, galactomannans and glucomannans.. The sequence is that of Mannan endo-1,4-beta-mannosidase 2 (MAN2) from Oryza sativa subsp. japonica (Rice).